The following is a 239-amino-acid chain: Tetraspanin-9 (239 aa).

Residues 1 to 13 are Cytoplasmic-facing; sequence MARGCLCCLKYMM. The helical transmembrane segment at 14–34 threads the bilayer; sequence FLFNLIFWLCGCGLLGVGIWL. At 35 to 55 the chain is on the extracellular side; it reads SVSQGNFATFSPSFPSLSAAN. Residues 56–76 traverse the membrane as a helical segment; sequence LVIAIGTIVMVTGFLGCLGAI. The Cytoplasmic portion of the chain corresponds to 77 to 85; it reads KENKCLLLS. The helical transmembrane segment at 86–106 threads the bilayer; the sequence is FFIILLIILLAELILLILFFV. Over 107 to 203 the chain is Extracellular; sequence YMDKVNENAK…VKMWFDDNKH (97 aa). An N-linked (GlcNAc...) asparagine glycan is attached at asparagine 180. Residues 204–224 traverse the membrane as a helical segment; that stretch reads VLGTIGMCILIIQILGMAFSM. Over 225–239 the chain is Cytoplasmic; that stretch reads TLFQQIHRTGKKYDA.

The protein belongs to the tetraspanin (TM4SF) family.

Its subcellular location is the membrane. In Xenopus tropicalis (Western clawed frog), this protein is Tetraspanin-9 (tspan9).